The primary structure comprises 38 residues: Photosystem II reaction center protein L (38 aa).

A helical membrane pass occupies residues 17 to 37 (SLYWGLLLIFVLAVLFSNYFF).

Belongs to the PsbL family. In terms of assembly, PSII is composed of 1 copy each of membrane proteins PsbA, PsbB, PsbC, PsbD, PsbE, PsbF, PsbH, PsbI, PsbJ, PsbK, PsbL, PsbM, PsbT, PsbX, PsbY, PsbZ, Psb30/Ycf12, at least 3 peripheral proteins of the oxygen-evolving complex and a large number of cofactors. It forms dimeric complexes.

The protein resides in the plastid. It localises to the chloroplast thylakoid membrane. Its function is as follows. One of the components of the core complex of photosystem II (PSII). PSII is a light-driven water:plastoquinone oxidoreductase that uses light energy to abstract electrons from H(2)O, generating O(2) and a proton gradient subsequently used for ATP formation. It consists of a core antenna complex that captures photons, and an electron transfer chain that converts photonic excitation into a charge separation. This subunit is found at the monomer-monomer interface and is required for correct PSII assembly and/or dimerization. The polypeptide is Photosystem II reaction center protein L (Adiantum capillus-veneris (Maidenhair fern)).